A 96-amino-acid polypeptide reads, in one-letter code: NADH-ubiquinone oxidoreductase chain 4L (96 aa).

The next 3 helical transmembrane spans lie at 1–21, 27–47, and 57–77; these read MPTTLIFTSFFLALLGLSLQR, LLLTLESMALALYVSTALWAL, and APLIILTFSACEAGMGLSLMI.

The protein belongs to the complex I subunit 4L family.

The protein localises to the mitochondrion membrane. It catalyses the reaction a ubiquinone + NADH + 5 H(+)(in) = a ubiquinol + NAD(+) + 4 H(+)(out). Core subunit of the mitochondrial membrane respiratory chain NADH dehydrogenase (Complex I) which catalyzes electron transfer from NADH through the respiratory chain, using ubiquinone as an electron acceptor. Part of the enzyme membrane arm which is embedded in the lipid bilayer and involved in proton translocation. The polypeptide is NADH-ubiquinone oxidoreductase chain 4L (MT-ND4L) (Petromyzon marinus (Sea lamprey)).